A 78-amino-acid polypeptide reads, in one-letter code: Large ribosomal subunit protein uL29 (78 aa).

It belongs to the universal ribosomal protein uL29 family.

In Rippkaea orientalis (strain PCC 8801 / RF-1) (Cyanothece sp. (strain PCC 8801)), this protein is Large ribosomal subunit protein uL29.